The chain runs to 191 residues: Peptidyl-tRNA hydrolase (191 aa).

Tyr-16 serves as a coordination point for tRNA. The active-site Proton acceptor is His-21. Positions 66, 68, and 114 each coordinate tRNA.

Belongs to the PTH family. In terms of assembly, monomer.

The protein localises to the cytoplasm. The enzyme catalyses an N-acyl-L-alpha-aminoacyl-tRNA + H2O = an N-acyl-L-amino acid + a tRNA + H(+). In terms of biological role, hydrolyzes ribosome-free peptidyl-tRNAs (with 1 or more amino acids incorporated), which drop off the ribosome during protein synthesis, or as a result of ribosome stalling. Catalyzes the release of premature peptidyl moieties from peptidyl-tRNA molecules trapped in stalled 50S ribosomal subunits, and thus maintains levels of free tRNAs and 50S ribosomes. The polypeptide is Peptidyl-tRNA hydrolase (Geotalea uraniireducens (strain Rf4) (Geobacter uraniireducens)).